Consider the following 55-residue polypeptide: Conotoxin vc5b (55 aa).

The first 15 residues, valine 1–alanine 15, serve as a signal peptide directing secretion. Positions glutamine 16 to glutamine 41 are excised as a propeptide. At glutamine 53 the chain carries Glutamine amide.

In terms of processing, contains 2 disulfide bonds that can be either 'C1-C3, C2-C4' or 'C1-C4, C2-C3', since these disulfide connectivities have been observed for conotoxins with cysteine framework V (for examples, see AC P0DQQ7 and AC P81755). In terms of tissue distribution, expressed by the venom duct.

It is found in the secreted. This chain is Conotoxin vc5b, found in Conus victoriae (Queen Victoria cone).